The primary structure comprises 400 residues: Enolase (400 aa).

Position 154 (Gln-154) interacts with (2R)-2-phosphoglycerate. The Proton donor role is filled by Glu-197. Positions 233, 274, and 301 each coordinate Mg(2+). Residues Lys-326, Arg-355, Ser-356, and Lys-377 each contribute to the (2R)-2-phosphoglycerate site. The active-site Proton acceptor is the Lys-326.

Belongs to the enolase family. Mg(2+) serves as cofactor.

Its subcellular location is the cytoplasm. The protein localises to the secreted. It is found in the cell surface. The enzyme catalyses (2R)-2-phosphoglycerate = phosphoenolpyruvate + H2O. The protein operates within carbohydrate degradation; glycolysis; pyruvate from D-glyceraldehyde 3-phosphate: step 4/5. Its function is as follows. Catalyzes the reversible conversion of 2-phosphoglycerate (2-PG) into phosphoenolpyruvate (PEP). It is essential for the degradation of carbohydrates via glycolysis. This is Enolase from Picrophilus torridus (strain ATCC 700027 / DSM 9790 / JCM 10055 / NBRC 100828 / KAW 2/3).